Consider the following 124-residue polypeptide: Small ribosomal subunit protein uS12 (124 aa).

The disordered stretch occupies residues 9–28; it reads KSERTVQKNQTKSPALDSCP. Asp89 is modified (3-methylthioaspartic acid).

It belongs to the universal ribosomal protein uS12 family. In terms of assembly, part of the 30S ribosomal subunit. Contacts proteins S8 and S17. May interact with IF1 in the 30S initiation complex.

Its function is as follows. With S4 and S5 plays an important role in translational accuracy. Functionally, interacts with and stabilizes bases of the 16S rRNA that are involved in tRNA selection in the A site and with the mRNA backbone. Located at the interface of the 30S and 50S subunits, it traverses the body of the 30S subunit contacting proteins on the other side and probably holding the rRNA structure together. The combined cluster of proteins S8, S12 and S17 appears to hold together the shoulder and platform of the 30S subunit. The chain is Small ribosomal subunit protein uS12 from Bdellovibrio bacteriovorus (strain ATCC 15356 / DSM 50701 / NCIMB 9529 / HD100).